A 259-amino-acid polypeptide reads, in one-letter code: Cytochrome c oxidase subunit 3 (259 aa).

A run of 7 helical transmembrane segments spans residues 13–33 (PWPL…ASWF), 36–56 (HGFL…IQWW), 80–100 (GMIL…WAFF), 125–145 (FSVP…VTWA), 160–180 (ALIL…GEYM), 195–215 (FFVA…FLAI), and 237–257 (AWYW…IYWW).

It belongs to the cytochrome c oxidase subunit 3 family. Component of the cytochrome c oxidase (complex IV, CIV), a multisubunit enzyme composed of a catalytic core of 3 subunits and several supernumerary subunits. The complex exists as a monomer or a dimer and forms supercomplexes (SCs) in the inner mitochondrial membrane with ubiquinol-cytochrome c oxidoreductase (cytochrome b-c1 complex, complex III, CIII).

The protein resides in the mitochondrion inner membrane. The catalysed reaction is 4 Fe(II)-[cytochrome c] + O2 + 8 H(+)(in) = 4 Fe(III)-[cytochrome c] + 2 H2O + 4 H(+)(out). In terms of biological role, component of the cytochrome c oxidase, the last enzyme in the mitochondrial electron transport chain which drives oxidative phosphorylation. The respiratory chain contains 3 multisubunit complexes succinate dehydrogenase (complex II, CII), ubiquinol-cytochrome c oxidoreductase (cytochrome b-c1 complex, complex III, CIII) and cytochrome c oxidase (complex IV, CIV), that cooperate to transfer electrons derived from NADH and succinate to molecular oxygen, creating an electrochemical gradient over the inner membrane that drives transmembrane transport and the ATP synthase. Cytochrome c oxidase is the component of the respiratory chain that catalyzes the reduction of oxygen to water. Electrons originating from reduced cytochrome c in the intermembrane space (IMS) are transferred via the dinuclear copper A center (CU(A)) of subunit 2 and heme A of subunit 1 to the active site in subunit 1, a binuclear center (BNC) formed by heme A3 and copper B (CU(B)). The BNC reduces molecular oxygen to 2 water molecules using 4 electrons from cytochrome c in the IMS and 4 protons from the mitochondrial matrix. This is Cytochrome c oxidase subunit 3 (COIII) from Lumbricus terrestris (Common earthworm).